A 125-amino-acid chain; its full sequence is Large ribosomal subunit protein mL51 (125 aa).

A mitochondrion-targeting transit peptide spans 1 to 29 (MWSVQKLLWGCRSLLPQGCRSFSLGNRDL).

This sequence belongs to the mitochondrion-specific ribosomal protein mL51 family. Component of the mitochondrial ribosome large subunit (39S) which comprises a 16S rRNA and about 50 distinct proteins.

It localises to the mitochondrion. The polypeptide is Large ribosomal subunit protein mL51 (mrpl51) (Xenopus laevis (African clawed frog)).